Consider the following 1310-residue polypeptide: Major viral transcription factor ICP4 homolog (1310 aa).

Disordered stretches follow at residues 117–271 (AGAR…GPVE), 285–454 (GAKA…TPII), and 636–696 (GSSP…SLLD). Residues 341–350 (PVEKKPKSRE) show a composition bias toward basic and acidic residues. Low complexity-rich tracts occupy residues 351–364 (FVSSSSSSSSWGSS), 392–407 (PSPSNSDDSDSNDGGS), and 648–666 (PSPTTPATQTPDPQPSAAA). The Nuclear localization signal signature appears at 677–685 (RLRTPRKRK). Serine 686 and serine 722 each carry phosphoserine; by VZV ORF66. Disordered stretches follow at residues 1195–1258 (RFVF…SFGV) and 1282–1310 (ELLSSSSSSEDEDDVWGGRGGRSPPQSRG). Positions 1217–1227 (RTADDREHALE) are enriched in basic and acidic residues. The span at 1228–1250 (PDDWEVGCEDAWDSEEGGGDDGD) shows a compositional bias: acidic residues.

It belongs to the herpesviridae ICP4 family. In terms of assembly, interacts with IE4 and IE63. Interacts with human USF1 and SP1. Phosphorylated by ORF66 protein kinase on Ser-686 and Ser-722. Also phosphorylated by ORF47 protein kinase and by human CSNK2A1/CKII.

It is found in the host nucleus. The protein localises to the host cytoplasm. Its subcellular location is the virion tegument. Functionally, transcriptional transactivator. May interact with and recruit specific components of the general transcription machinery to viral promoters and stabilize their formation for transcription initiation. Negatively regulates its own transcription. This immediate early (EI) protein may be necessary in virion for viral pathogenesis. This Homo sapiens (Human) protein is Major viral transcription factor ICP4 homolog.